Here is a 426-residue protein sequence, read N- to C-terminus: Probable imidazolonepropionase (426 aa).

Y159 and H192 together coordinate 4-imidazolone-5-propanoate. Y159 contacts N-formimidoyl-L-glutamate. H260 contributes to the Fe(3+) binding site. H260 lines the Zn(2+) pocket. E263 serves as a coordination point for 4-imidazolone-5-propanoate. D334 contributes to the Fe(3+) binding site. Residue D334 participates in Zn(2+) binding. N336 is an N-formimidoyl-L-glutamate binding site.

This sequence belongs to the metallo-dependent hydrolases superfamily. HutI family. It depends on Zn(2+) as a cofactor. The cofactor is Fe(3+).

It catalyses the reaction 4-imidazolone-5-propanoate + H2O = N-formimidoyl-L-glutamate. It functions in the pathway amino-acid degradation; L-histidine degradation into L-glutamate; N-formimidoyl-L-glutamate from L-histidine: step 3/3. This Mus musculus (Mouse) protein is Probable imidazolonepropionase (Amdhd1).